Reading from the N-terminus, the 752-residue chain is Myb-related protein A (752 aa).

The interval 1–22 (MAKRSRSEDEDDDLQYADHDYE) is disordered. HTH myb-type domains follow at residues 30-81 (KKLW…QKVL), 82-137 (NPEL…NPEV), and 138-188 (KKSS…RRKV). 3 consecutive DNA-binding regions (H-T-H motif) follow at residues 58 to 81 (WTLI…QKVL), 110 to 133 (WSLI…HNHL), and 161 to 184 (WAEI…NSTM). Lysine 199 participates in a covalent cross-link: Glycyl lysine isopeptide (Lys-Gly) (interchain with G-Cter in SUMO2). Residues 230–295 (IPGYQYVSPE…RIPSQPGSFS (66 aa)) are transcriptional activation domain. The segment at 298 to 553 (SGSFLMDDNM…IRRSILGTTP (256 aa)) is negative regulatory domain. Lysine 394 bears the N6-acetyllysine mark. The disordered stretch occupies residues 451–480 (RKMRVGHSPGSELRDGSLNDGGNMALKHTP). Glycyl lysine isopeptide (Lys-Gly) (interchain with G-Cter in SUMO2) cross-links involve residues lysine 592 and lysine 602.

Component of the DREAM complex (also named LINC complex) at least composed of E2F4, E2F5, LIN9, LIN37, LIN52, LIN54, MYBL1, MYBL2, RBL1, RBL2, RBBP4, TFDP1 and TFDP2. The complex exists in quiescent cells where it represses cell cycle-dependent genes. It dissociates in S phase when LIN9, LIN37, LIN52 and LIN54 form a subcomplex that binds to MYBL2. Expressed in a variety of lymphoid and solid tumor lines cultured in vitro.

It localises to the nucleus. In terms of biological role, transcription factor that specifically recognizes the sequence 5'-YAAC[GT]G-3'. Acts as a master regulator of male meiosis by promoting expression of piRNAs: activates expression of both piRNA precursor RNAs and expression of protein-coding genes involved in piRNA metabolism. The piRNA metabolic process mediates the repression of transposable elements during meiosis by forming complexes composed of piRNAs and Piwi proteins and governs the methylation and subsequent repression of transposons, which is essential for the germline integrity. Transcriptional activator of SOX30. This Homo sapiens (Human) protein is Myb-related protein A (MYBL1).